Here is a 356-residue protein sequence, read N- to C-terminus: 3-dehydroquinate synthase (356 aa).

NAD(+) is bound by residues 106–110, 130–131, K143, and K152; these read GVVGD and TT. Zn(2+)-binding residues include E185, H248, and H265.

The protein belongs to the sugar phosphate cyclases superfamily. Dehydroquinate synthase family. Co(2+) is required as a cofactor. It depends on Zn(2+) as a cofactor. The cofactor is NAD(+).

It is found in the cytoplasm. It catalyses the reaction 7-phospho-2-dehydro-3-deoxy-D-arabino-heptonate = 3-dehydroquinate + phosphate. It participates in metabolic intermediate biosynthesis; chorismate biosynthesis; chorismate from D-erythrose 4-phosphate and phosphoenolpyruvate: step 2/7. Functionally, catalyzes the conversion of 3-deoxy-D-arabino-heptulosonate 7-phosphate (DAHP) to dehydroquinate (DHQ). The protein is 3-dehydroquinate synthase of Thermoanaerobacter sp. (strain X514).